The primary structure comprises 504 residues: Taurochenodeoxycholic 6 alpha-hydroxylase (504 aa).

Transmembrane regions (helical) follow at residues 6 to 26 (LASV…LLLL) and 110 to 130 (APVL…LLNG). Cys451 contributes to the heme binding site.

The protein belongs to the cytochrome P450 family. Heme is required as a cofactor. As to expression, primarily expressed in liver. Low expression in kidney.

It localises to the endoplasmic reticulum membrane. It carries out the reaction taurochenodeoxycholate + reduced [NADPH--hemoprotein reductase] + O2 = taurohyocholate + oxidized [NADPH--hemoprotein reductase] + H2O + H(+). It catalyses the reaction lithocholate + reduced [NADPH--hemoprotein reductase] + O2 = hyodeoxycholate + oxidized [NADPH--hemoprotein reductase] + H2O + H(+). Catalyzes the 6 alpha hydroxylation oxidation of taurodeoxycholate to produce the pig specific bile acid taurohyocholic acid. This chain is Taurochenodeoxycholic 6 alpha-hydroxylase (CYP4A21), found in Sus scrofa (Pig).